Reading from the N-terminus, the 282-residue chain is Undecaprenyl-diphosphatase (282 aa).

A run of 7 helical transmembrane segments spans residues 40-60 (GAAFTAIVQIGTLAAVLIYFM), 89-109 (WMIAAGTIPIVVFGLAFKDDI), 113-133 (LRSLYWVSAALIALALVLSIA), 150-170 (ISEITWLDAMIIGFAQAMALI), 196-216 (FSFLLSLPSVFAAGIYQLYKT), 230-250 (IAVATVFAFIFGYLSIAFLLT), and 258-278 (GIFIGYRLLLGISLIIMIGTG).

Belongs to the UppP family.

The protein localises to the cell inner membrane. The catalysed reaction is di-trans,octa-cis-undecaprenyl diphosphate + H2O = di-trans,octa-cis-undecaprenyl phosphate + phosphate + H(+). Functionally, catalyzes the dephosphorylation of undecaprenyl diphosphate (UPP). Confers resistance to bacitracin. This chain is Undecaprenyl-diphosphatase, found in Chlorobaculum parvum (strain DSM 263 / NCIMB 8327) (Chlorobium vibrioforme subsp. thiosulfatophilum).